Reading from the N-terminus, the 372-residue chain is Prostaglandin E synthase 2 (372 aa).

Topologically, residues Met-1 to Arg-54 are lumenal. Residues Leu-55–His-71 traverse the membrane as a helical segment. The Cytoplasmic portion of the chain corresponds to Thr-72 to Gln-372. Positions Ser-87–Lys-190 constitute a Glutaredoxin domain. Position 92 is a phosphoserine (Ser-92). Glutathione-binding positions include Val-145 and Asp-161–Ser-162. Positions Asp-259–Gln-372 constitute a GST C-terminal domain.

It belongs to the GST superfamily. In terms of assembly, may interact with CEBPB. Interacts with EXOSC10. Homodimer. Synthesized as a Golgi membrane-associated protein, and the proteolytic removal of the N-terminal hydrophobic domain leads to the formation of a mature cytosolic enzyme. In terms of tissue distribution, detected in heart (at protein level). Widely expressed. Expressed in heart &gt; kidney &gt; muscle &gt; testis &gt; endometrium = ovary &gt; myometrium = spleen = lung. In endometrium, it is mainly expressed in luminal epithelial cells followed by glandular epithelial cells, but expression is also present in stromal cells at a lower level.

The protein localises to the microsome membrane. The protein resides in the cytoplasm. The enzyme catalyses prostaglandin H2 = prostaglandin E2. It catalyses the reaction prostaglandin H2 = (12S)-hydroxy-(5Z,8E,10E)-heptadecatrienoate + malonaldehyde. It functions in the pathway lipid metabolism; prostaglandin biosynthesis. Its activity is regulated as follows. Isomerase activity is increased by sulfhydril compounds. Dithiothreitol (DTT) is most effective, followed by glutathione (GSH) and 2-mercaptoethanol. In terms of biological role, isomerase that catalyzes the conversion of PGH2 into the more stable prostaglandin E2 (PGE2) (in vitro). The biological function and the GSH-dependent property of PTGES2 is still under debate. In vivo, PTGES2 could form a complex with GSH and heme and would not participate in PGE2 synthesis but would catalyze the degradation of prostaglandin E2 H2 (PGH2) to 12(S)-hydroxy-5(Z),8(E),10(E)-heptadecatrienoic acid (HHT) and malondialdehyde (MDA). This chain is Prostaglandin E synthase 2 (PTGES2), found in Bos taurus (Bovine).